Consider the following 149-residue polypeptide: Deoxyuridine 5'-triphosphate nucleotidohydrolase (149 aa).

Residues Arg-68–Gly-70, Asn-81, and Leu-85–Asp-87 each bind substrate.

Belongs to the dUTPase family. It depends on Mg(2+) as a cofactor.

The catalysed reaction is dUTP + H2O = dUMP + diphosphate + H(+). The protein operates within pyrimidine metabolism; dUMP biosynthesis; dUMP from dCTP (dUTP route): step 2/2. Functionally, this enzyme is involved in nucleotide metabolism: it produces dUMP, the immediate precursor of thymidine nucleotides and it decreases the intracellular concentration of dUTP so that uracil cannot be incorporated into DNA. The chain is Deoxyuridine 5'-triphosphate nucleotidohydrolase from Nitrosomonas eutropha (strain DSM 101675 / C91 / Nm57).